A 1284-amino-acid polypeptide reads, in one-letter code: A-type inclusion protein A25 homolog (1284 aa).

The disordered stretch occupies residues Lys340–Glu383. The segment covering Glu348–Lys357 has biased composition (basic and acidic residues). Tandem repeats lie at residues Val611–Glu637, Asp638–Gly665, Asn666–Gly689, Asn690–Asp720, Thr721–Asp751, Met752–Thr780, Ser781–Ser811, Ala812–Ser842, Tyr843–Ala871, and Lys872–Glu912. The 10 X approximate tandem repeats stretch occupies residues Val611–Glu912. The interval Pro1169 to Ser1234 is disordered. The segment covering Val1180–Pro1192 has biased composition (low complexity). Residues Ser1211–Ala1221 show a composition bias toward polar residues.

This sequence belongs to the poxviridae A25 protein family. Interacts (via N-terminus) with protein A26.

It localises to the virion. Functionally, structural protein that forms a matrix surrounding the mature virion (MV) through interaction with protein A26. Presence of protein A25 in the virion structurally prevents direct virus-cell fusion mechanism. The chain is A-type inclusion protein A25 homolog (ATI) from Apodemus sylvaticus (European woodmouse).